The sequence spans 265 residues: Photosystem II 22 kDa protein, chloroplastic (265 aa).

The N-terminal 59 residues, 1 to 59 (MAQTMLLTSGVTAGHFLRNKSPLAQPKVHHLFLSGNSPVALPSRRQSFVPLALFKPKTK), are a transit peptide targeting the chloroplast. 2 repeat units span residues 54-158 (FKPK…FVDD) and 159-264 (PPTG…DGEE). 4 consecutive transmembrane segments (helical) span residues 96 to 116 (VAMIGFAASLLGEALTGKGIL), 130 to 150 (AEPLLLFFILFTLLGAIGALG), 195 to 215 (LFVGRLAQLGIAFSLIGEIIT), and 229 to 249 (IPIQDIEPLVLLNVAFFFFAA).

The protein belongs to the ELIP/psbS family.

Its subcellular location is the plastid. The protein resides in the chloroplast thylakoid membrane. Functionally, plays an important role in non-photochemical quenching (NPQ), a process maintains the balance between dissipation and utilization of light energy to minimize generation of oxidizing molecules, thereby protecting the plant against photo-oxidative damage; acts upstream of DLDG1. Is not necessary for efficient light harvesting and photosynthesis. In Arabidopsis thaliana (Mouse-ear cress), this protein is Photosystem II 22 kDa protein, chloroplastic.